The sequence spans 388 residues: MAYSARLRKAVGAVRATLSAVELCDVQAPEFAQHGDHAVAADAPLVLVACSGGRDSMALAAVSHIVCTSMGVRCGAVIVDHGLQAGSERVASEAADRCRALGLGPVIMRNATVQARGEGLEAAARQARYDELCAAAHESGAIAVLLAHTMDDQAETVLIGLLRSRGVDALAGMPQVFTRSGATFARPLLTLTRAETTGICEDLGVEYWDDPTNGDAVDGELPNDYPLRSRVRHDLLPAIERFAGFNVTRHFAESARLARMDKEYLDQRSDEVMGEAVAAVDRPASSAAVSTDAPRACVAGDTNDSGHGIGLMIGVKRIAREPEAIRLRVIAHALSQAGVNASAAQIAAIDRLVVDWHGQGGVSLPRGYSANRKKHVIRVCQDGAHANR.

Ser51–Ser56 serves as a coordination point for ATP.

The protein belongs to the tRNA(Ile)-lysidine synthase family.

Its subcellular location is the cytoplasm. The catalysed reaction is cytidine(34) in tRNA(Ile2) + L-lysine + ATP = lysidine(34) in tRNA(Ile2) + AMP + diphosphate + H(+). Its function is as follows. Ligates lysine onto the cytidine present at position 34 of the AUA codon-specific tRNA(Ile) that contains the anticodon CAU, in an ATP-dependent manner. Cytidine is converted to lysidine, thus changing the amino acid specificity of the tRNA from methionine to isoleucine. The polypeptide is tRNA(Ile)-lysidine synthase (Bifidobacterium longum (strain NCC 2705)).